The following is a 338-amino-acid chain: Methionine import ATP-binding protein MetN 2 (338 aa).

An ABC transporter domain is found at I2–V242. G39–S46 is an ATP binding site.

This sequence belongs to the ABC transporter superfamily. Methionine importer (TC 3.A.1.24) family. The complex is composed of two ATP-binding proteins (MetN), two transmembrane proteins (MetI) and a solute-binding protein (MetQ).

It localises to the cell inner membrane. The enzyme catalyses L-methionine(out) + ATP + H2O = L-methionine(in) + ADP + phosphate + H(+). The catalysed reaction is D-methionine(out) + ATP + H2O = D-methionine(in) + ADP + phosphate + H(+). Part of the ABC transporter complex MetNIQ involved in methionine import. Responsible for energy coupling to the transport system. In Salmonella typhimurium (strain LT2 / SGSC1412 / ATCC 700720), this protein is Methionine import ATP-binding protein MetN 2.